A 167-amino-acid chain; its full sequence is Ion-translocating oxidoreductase complex subunit B (167 aa).

A hydrophobic region spans residues 1–22; the sequence is MITLIIFSFLSFLLGIILSFTA. The 4Fe-4S domain occupies 28-87; the sequence is QEDPIVEIVNELLPQSQCAQCGYSGCYPYAKAIVENSEKINKCIPGGTDLISAISSVLSI. [4Fe-4S] cluster is bound by residues Cys45, Cys48, Cys53, Cys70, Cys113, Cys116, Cys119, Cys123, Cys143, Cys146, Cys149, and Cys153. 2 consecutive 4Fe-4S ferredoxin-type domains span residues 104–133 and 134–163; these read NTVL…GAPN and FIHT…IKKE.

The protein belongs to the 4Fe4S bacterial-type ferredoxin family. RnfB subfamily. As to quaternary structure, the complex is composed of six subunits: RnfA, RnfB, RnfC, RnfD, RnfE and RnfG. Requires [4Fe-4S] cluster as cofactor.

The protein localises to the cell inner membrane. Its function is as follows. Part of a membrane-bound complex that couples electron transfer with translocation of ions across the membrane. In Buchnera aphidicola subsp. Acyrthosiphon pisum (strain Tuc7), this protein is Ion-translocating oxidoreductase complex subunit B.